A 496-amino-acid chain; its full sequence is Rhamnulokinase (496 aa).

13–17 (ASSGR) is a binding site for ATP. Substrate-binding positions include Gly-83 and 236–238 (HDT). Asp-237 acts as the Proton acceptor in catalysis. Thr-259 lines the ATP pocket. Position 296 (Asn-296) interacts with substrate. Gln-304 serves as a coordination point for ATP. A disulfide bridge links Cys-353 with Cys-370. Gly-402 is an ATP binding site. A disulfide bond links Cys-413 and Cys-417.

Belongs to the rhamnulokinase family. Requires Mg(2+) as cofactor.

It catalyses the reaction L-rhamnulose + ATP = L-rhamnulose 1-phosphate + ADP + H(+). Its pathway is carbohydrate degradation; L-rhamnose degradation; glycerone phosphate from L-rhamnose: step 2/3. Functionally, involved in the catabolism of L-rhamnose (6-deoxy-L-mannose). Catalyzes the transfer of the gamma-phosphate group from ATP to the 1-hydroxyl group of L-rhamnulose to yield L-rhamnulose 1-phosphate. The sequence is that of Rhamnulokinase from Pectobacterium atrosepticum (strain SCRI 1043 / ATCC BAA-672) (Erwinia carotovora subsp. atroseptica).